Here is a 334-residue protein sequence, read N- to C-terminus: MVDLSKDLQFFKVFLPEFGSHELVIPPAFIDMLEKPLPKEAFLVDEIGRLWCVETKTEDTEERFCVFFTKGWQSFANDQSLEFGDFLVFSYDGDSRFSVTIFANDGCKKDVGVVSTTDRSRVSLDEEEPDDIFTKPDRMRDCDCGQSINRKRKRDSVNEDPHVLVDDKPEYVSTYKTKPEHSEKTQRTVNRAGDTCDISWFPEKKHNGFEESVYKPKHPHFVRNITRGSLQKLELPLTFLRSNGIELEEDIELCDESGKKWPLKILNHDRGFKFSHESWLCFCKSHEMILTNKCLFEFIVPSNGRCSEILVRIVSGRLPTTMTKNNYQVIDMQP.

DNA-binding regions (TF-B3) lie at residues 8 to 105 (LQFF…FAND) and 218 to 317 (HPHF…VSGR).

Its subcellular location is the nucleus. The polypeptide is Putative B3 domain-containing protein At5g66980 (Arabidopsis thaliana (Mouse-ear cress)).